The sequence spans 583 residues: Pre-mRNA-processing protein 45 (583 aa).

Disordered regions lie at residues methionine 1–aspartate 68, lysine 177–glutamate 253, methionine 321–arginine 424, and arginine 519–asparagine 583. Residues threonine 203 to lysine 225 show a composition bias toward basic and acidic residues. Residues arginine 233–histidine 244 show a composition bias toward pro residues. A compositionally biased stretch (basic and acidic residues) spans leucine 325–arginine 350. Residues arginine 367–arginine 377 show a composition bias toward low complexity. Basic and acidic residues-rich tracts occupy residues alanine 386–arginine 424, arginine 519–alanine 538, and proline 569–asparagine 583.

Belongs to the SNW family. As to quaternary structure, associated with the spliceosome.

It is found in the nucleus. Involved in pre-mRNA splicing. The polypeptide is Pre-mRNA-processing protein 45 (prp45) (Emericella nidulans (strain FGSC A4 / ATCC 38163 / CBS 112.46 / NRRL 194 / M139) (Aspergillus nidulans)).